A 405-amino-acid polypeptide reads, in one-letter code: Cystathionine gamma-lyase (405 aa).

Substrate-binding residues include R62, Y114, and R119. At K212 the chain carries N6-(pyridoxal phosphate)lysine. Residue E339 coordinates substrate.

It belongs to the trans-sulfuration enzymes family. As to quaternary structure, homotetramer. Interacts with CALM in a calcium-dependent manner. Pyridoxal 5'-phosphate is required as a cofactor.

Its subcellular location is the cytoplasm. The enzyme catalyses L,L-cystathionine + H2O = 2-oxobutanoate + L-cysteine + NH4(+). It carries out the reaction L-cysteine + H2O = hydrogen sulfide + pyruvate + NH4(+) + H(+). The catalysed reaction is L-homocysteine + H2O = 2-oxobutanoate + hydrogen sulfide + NH4(+) + H(+). It catalyses the reaction L-homoserine = 2-oxobutanoate + NH4(+). The enzyme catalyses L-selenocystathionine + H2O = L-selenocysteine + 2-oxobutanoate + NH4(+). Its pathway is amino-acid biosynthesis; L-cysteine biosynthesis; L-cysteine from L-homocysteine and L-serine: step 2/2. Functionally, catalyzes the last step in the trans-sulfuration pathway from L-methionine to L-cysteine in a pyridoxal-5'-phosphate (PLP)-dependent manner, which consists on cleaving the L,L-cystathionine molecule into L-cysteine, ammonia and 2-oxobutanoate. Part of the L-cysteine derived from the trans-sulfuration pathway is utilized for biosynthesis of the ubiquitous antioxidant glutathione. Besides its role in the conversion of L-cystathionine into L-cysteine, it utilizes L-cysteine and L-homocysteine as substrates (at much lower rates than L,L-cystathionine) to produce hydrogen sulfide (H2S). In vitro, it converts two L-cysteine molecules into lanthionine and H2S, and two L-homocysteine molecules to homolanthionine and H2S, which can be particularly relevant under conditions of severe hyperhomocysteinemia. Lanthionine and homolanthionine are structural homologs of L,L-cystathionine that differ by the absence or presence of an extra methylene group, respectively. Acts as a cysteine-protein sulfhydrase by mediating sulfhydration of target proteins: sulfhydration consists of converting -SH groups into -SSH on specific cysteine residues of target proteins such as GAPDH, PTPN1 and NF-kappa-B subunit RELA, thereby regulating their function. By generating the gasotransmitter H2S, it participates in a number of physiological processes such as vasodilation, bone protection, and inflammation. Plays an essential role in myogenesis by contributing to the biogenesis of H2S in skeletal muscle tissue. Can also accept homoserine as substrate. Catalyzes the elimination of selenocystathionine (which can be derived from the diet) to yield selenocysteine, ammonia and 2-oxobutanoate. The polypeptide is Cystathionine gamma-lyase (CTH) (Sus scrofa (Pig)).